The sequence spans 20 residues: Phospholipase A2 homolog P-elapitoxin-Aa1a gamma chain (20 aa).

This sequence belongs to the phospholipase A2 family. Group I subfamily. In terms of assembly, heterotrimer of alpha, beta and gamma chains, each related to PLA2. Glycosylated. As to expression, expressed by the venom gland.

The protein localises to the secreted. Heterotrimer: Snake venom phospholipase A2 (PLA2) that has presynaptic neurotoxicity. Inhibits nerve-evoked twitch contractions but not responses to cholinergic agonists acetylcholine and carbachol and to depolarizing agonist KCl. Causes a fade in tetanic contractions. Displays a triphasic mode of action with depression, enhancement and blockade of neurotransmission. Does not display myotoxic activity such as changes in baseline muscle tension or inhibition of directly stimulated muscle twitches. All subunits are necessary for maximum toxicity. Its function is as follows. Monomer: the gamma chain has no significant enzymatic activity and is not toxic by itself. The sequence is that of Phospholipase A2 homolog P-elapitoxin-Aa1a gamma chain from Acanthophis antarcticus (Common death adder).